The sequence spans 759 residues: Solute carrier family 26 member 6 (759 aa).

The Cytoplasmic segment spans residues 1 to 115 (MGLADASGPR…PQGLAYALLA (115 aa)). The helical transmembrane segment at 116–136 (GLPPVFGLYSSFYPVFIYFLF) threads the bilayer. At 137 to 186 (GTSRHISVGTFAVMSVMVGSVTESLAPQALNDSMINETARDAARVQVAST) the chain is on the extracellular side. Residues N167 and N172 are each glycosylated (N-linked (GlcNAc) asparagine). The chain crosses the membrane as a helical span at residues 187-207 (LSVLVGLFQVGLGLIHFGFVV). Over 208–263 (TYLSEPLVRGYTTAAAVQVFVSQLKYVFGLHLSSHSGPLSLIYTVLEVCWKLPQSK) the chain is Cytoplasmic. The chain crosses the membrane as a helical span at residues 264–284 (VGTVVTAAVAGVVLVVVKLLN). The Extracellular portion of the chain corresponds to 285–293 (DKLQQQLPM). Residues 294 to 314 (PIPGELLTLIGATGISYGMGL) traverse the membrane as a helical segment. Topologically, residues 315–347 (KHRFEVDVVGNIPAGLVPPVAPNTQLFSKLVGS) are cytoplasmic. The helical transmembrane segment at 348–368 (AFTIAVVGFAIAISLGKIFAL) threads the bilayer. Topologically, residues 369–379 (RHGYRVDSNQE) are extracellular. The helical transmembrane segment at 380–400 (LVALGLSNLIGGIFQCFPVSC) threads the bilayer. Residues 401–416 (SMSRSLVQESTGGNSQ) are Cytoplasmic-facing. Residues 417–437 (VAGAISSLFILLIIVKLGELF) traverse the membrane as a helical segment. Residues 438 to 484 (HDLPKAVLAAIIIVNLKGMLRQLSDMRSLWKANRADLLIWLVTFTAT) are Extracellular-facing. The helical transmembrane segment at 485-505 (ILLNLDLGLVVAVIFSLLLVV) threads the bilayer. Topologically, residues 506-759 (VRTQMPHYSV…PDSPVSVTRL (254 aa)) are cytoplasmic. An STAS domain is found at 530–742 (EYSEAKEVRG…ASVHDAVTFA (213 aa)). Phosphoserine; by PKC occurs at positions 553 and 582. S616 carries the phosphoserine modification. A disordered region spans residues 636–657 (GDKMEDATANGQEDSKAPDGST). A phosphoserine mark is found at S752 and S755.

Belongs to the SLC26A/SulP transporter (TC 2.A.53) family. In terms of assembly, interacts (via C-terminal domain) with PDZK1 (via C-terminal PDZ domain); the interaction induces chloride and oxalate exchange transport. Interacts with CFTR and SLC26A3. Interacts with AHCYL1; the interaction increases SLC26A6 activity. Interacts with NHERF1 (via the PDZ domains) and NHERF2 (via the PDZ domains). Interacts (via C-terminal cytoplasmic domain) with CA2; the interaction stimulates chloride-bicarbonate exchange activity. As to quaternary structure, interacts with NHERF1 (via the PDZ domains) and NHERF2 (via the PDZ domains). Phosphorylated on serine residues by PKC; the phosphorylation disrupts interaction with carbonic anhydrase CA2 and reduces bicarbonate transport activity in a phorbol myristate acetate (PMA)-induced manner. Post-translationally, glycosylation at Asn-167 and Asn-172 positively regulates its chloride oxalate exchanger activity. As to expression, ubiquitous. Highest levels in kidney and pancreas. Lower expression in heart, skeletal muscle, liver and placenta. Also found in lung and brain. Ubiquitously expressed. Highest levels expressed in the kidney and pancreas. In terms of tissue distribution, expressed weakly in placenta, lung, liver and pancreas. As to expression, expressed in heart, brain, placenta, lung, liver, kidney, pancreas, spleen, thymus, prostate, testis and ovary.

The protein resides in the cell membrane. The protein localises to the apical cell membrane. It localises to the cytoplasmic vesicle membrane. Its subcellular location is the microsome. It is found in the basolateral cell membrane. The catalysed reaction is 2 hydrogencarbonate(in) + chloride(out) = 2 hydrogencarbonate(out) + chloride(in). It catalyses the reaction oxalate(in) + chloride(out) = oxalate(out) + chloride(in). It carries out the reaction oxalate(in) + formate(out) = oxalate(out) + formate(in). The enzyme catalyses oxalate(in) + sulfate(out) = oxalate(out) + sulfate(in). The catalysed reaction is 2 hydrogencarbonate(out) + sulfate(in) = 2 hydrogencarbonate(in) + sulfate(out). Oxalate transport activity is inhibited by 4,4'-diisothiocyanatostilbene-2,2'-disulfonic acid (DIDS). With respect to regulation, chloride, bicarbonate and sulfate transport activities are inhibited by 4,4'-diisothiocyanatostilbene-2,2'-disulfonic acid (DIDS). Functionally, apical membrane anion-exchanger with wide epithelial distribution that plays a role as a component of the pH buffering system for maintaining acid-base homeostasis. Acts as a versatile DIDS-sensitive inorganic and organic anion transporter that mediates the uptake of monovalent anions like chloride, bicarbonate, formate and hydroxyl ion and divalent anions like sulfate and oxalate. Functions in multiple exchange modes involving pairs of these anions, which include chloride-bicarbonate, chloride-oxalate, oxalate-formate, oxalate-sulfate and chloride-formate exchange. Apical membrane chloride-bicarbonate exchanger that mediates luminal chloride absorption and bicarbonate secretion by the small intestinal brush border membrane and contributes to intracellular pH regulation in the duodenal upper villous epithelium during proton-coupled peptide absorption, possibly by providing a bicarbonate import pathway. Also mediates intestinal chloride absorption and oxalate secretion, thereby preventing hyperoxaluria and calcium oxalate urolithiasis. Transepithelial oxalate secretion, chloride-formate, chloride-oxalate and chloride-bicarbonate transport activities in the duodenum are inhibited by PKC activation in a calcium-independent manner. The apical membrane chloride-bicarbonate exchanger also provides a major route for fluid and bicarbonate secretion into the proximal tubules of the kidney as well as into the proximal part of the interlobular pancreatic ductal tree, where it mediates electrogenic chloride-bicarbonate exchange with a chloride-bicarbonate stoichiometry of 1:2, and hence will dilute and alkalinize protein-rich acinar secretion. Also mediates the transcellular sulfate absorption and oxalate secretion across the apical membrane in the duodenum and the formate ion efflux at the apical brush border of cells in the proximal tubules of kidney. Plays a role in sperm capacitation by increasing intracellular pH. In terms of biological role, apical membrane chloride-bicarbonate exchanger. Its association with carbonic anhydrase CA2 forms a bicarbonate transport metabolon; hence maximizes the local concentration of bicarbonate at the transporter site. This is Solute carrier family 26 member 6 (SLC26A6) from Homo sapiens (Human).